Consider the following 1039-residue polypeptide: RNA-binding protein Unr (1039 aa).

Polar residues predominate over residues 49–62 (TTLGLQPQGQGPSP). 2 disordered regions span residues 49 to 126 (TTLG…QQQH) and 165 to 184 (SIFG…PSQT). 3 stretches are compositionally biased toward low complexity: residues 63 to 80 (QQQQ…QHQQ), 89 to 126 (QQHM…QQQH), and 165 to 182 (SIFG…ADPS). One can recognise a CSD 1 domain in the interval 186 to 250 (RETGIIEKLL…GKPIASQVSK (65 aa)). The region spanning 261–337 (RVTGTVTTEL…GNLGACHIRL (77 aa)) is the CSD 2; degenerate domain. Residues 345-413 (KYRGVVCSMK…GREFACNITR (69 aa)) enclose the CSD 3 domain. The CSD 4; degenerate domain maps to 428 to 503 (VYKGQVLKSL…RDQLQRATSI (76 aa)). The CSD 5 domain maps to 517 to 585 (REQGTIASLK…SRLQAIRIKH (69 aa)). The CSD 6; degenerate domain maps to 593-673 (FETLVASNIE…KECIAVNVQQ (81 aa)). The interval 721–741 (QNGYVMHGSPGGSTSSVGSNN) is disordered. Over residues 732 to 741 (GSTSSVGSNN) the composition is skewed to low complexity. Positions 763–831 (VYRGFIAVMK…NCLPAENVRM (69 aa)) constitute a CSD 7 domain. A CSD 8; degenerate domain is found at 846–919 (THNGVVARPL…SGRAACVNAV (74 aa)). In terms of domain architecture, CSD 9 spans 922 to 987 (KKRATVDSIK…GKSSACNVLK (66 aa)).

It belongs to the UNR family. As to quaternary structure, interacts with Sxl; cooperates with Sxl to prevent translation of msl-2 transcripts. Interacts with mle; promoting association between mle and roX2 non-coding RNA. Interacts (via CSD domain 7-9) with pAbp; promoting translation inhibition of msl-2 transcripts.

The protein resides in the cytoplasm. Its function is as follows. RNA-binding protein that acts as a regulator of dosage compensation in both males and females. In males, acts as positive regulator of dosage compensation by promoting assembly of the MSL complex, a multiprotein complex that mediates X-chromosome dosage compensation. Promotes MSL complex assembly via association with roX1 and roX2 non-coding RNA components of the MSL complex, facilitating the interaction between non-coding RNAs and mle. In females, acts as an inhibitor of dosage compensation together with Sxl by preventing production of msl-2 protein, an essential component of the MSL complex. Specifically binds to the 3'-UTR of msl-2 transcripts, and cooperates with Sxl to prevent translation initiation of msl-2 transcripts. Mechanistically, Sxl and Unr inhibit translation initiation by preventing ribosome recruitment after pAbp-mediated recruitment of the eIF4F complex. The chain is RNA-binding protein Unr from Drosophila melanogaster (Fruit fly).